Reading from the N-terminus, the 560-residue chain is Membrane protein insertase YidC (560 aa).

The chain crosses the membrane as a helical span at residues 7–27; the sequence is ILIVALAIVSYVMVLKWNQDY. Residues 38–56 are compositionally biased toward polar residues; that stretch reads ASSTTTSGLPDTATGNNAA. Residues 38–76 form a disordered region; sequence ASSTTTSGLPDTATGNNAAASDDIPRAASDTSAPAETPV. 4 helical membrane passes run 367–387, 437–457, 468–488, and 515–535; these read IVGN…GIFF, LGGC…YWVL, FMLW…PIIM, and PIIF…YWVV.

The protein belongs to the OXA1/ALB3/YidC family. Type 1 subfamily. As to quaternary structure, interacts with the Sec translocase complex via SecD. Specifically interacts with transmembrane segments of nascent integral membrane proteins during membrane integration.

The protein localises to the cell inner membrane. Functionally, required for the insertion and/or proper folding and/or complex formation of integral membrane proteins into the membrane. Involved in integration of membrane proteins that insert both dependently and independently of the Sec translocase complex, as well as at least some lipoproteins. Aids folding of multispanning membrane proteins. The chain is Membrane protein insertase YidC from Pseudomonas fluorescens (strain Pf0-1).